The sequence spans 309 residues: Probable 5-dehydro-4-deoxyglucarate dehydratase (309 aa).

This sequence belongs to the DapA family.

It carries out the reaction 5-dehydro-4-deoxy-D-glucarate + H(+) = 2,5-dioxopentanoate + CO2 + H2O. Its pathway is carbohydrate acid metabolism; D-glucarate degradation; 2,5-dioxopentanoate from D-glucarate: step 2/2. The chain is Probable 5-dehydro-4-deoxyglucarate dehydratase from Saccharopolyspora erythraea (strain ATCC 11635 / DSM 40517 / JCM 4748 / NBRC 13426 / NCIMB 8594 / NRRL 2338).